The primary structure comprises 179 residues: Inosine/xanthosine triphosphatase (179 aa).

Glutamate 71 is a Mg(2+) binding site. Residue 71 to 72 (EA) participates in substrate binding.

This sequence belongs to the YjjX NTPase family. Homodimer. Mg(2+) serves as cofactor. It depends on Mn(2+) as a cofactor.

It carries out the reaction XTP + H2O = XDP + phosphate + H(+). The enzyme catalyses ITP + H2O = IDP + phosphate + H(+). Functionally, phosphatase that hydrolyzes non-canonical purine nucleotides such as XTP and ITP to their respective diphosphate derivatives. Probably excludes non-canonical purines from DNA/RNA precursor pool, thus preventing their incorporation into DNA/RNA and avoiding chromosomal lesions. This chain is Inosine/xanthosine triphosphatase, found in Shewanella sp. (strain MR-4).